An 890-amino-acid polypeptide reads, in one-letter code: Protein translocase subunit SecA (890 aa).

ATP is bound by residues Gln-86, Gly-104–Thr-108, and Asp-493. The segment covering Glu-851 to Arg-872 has biased composition (basic and acidic residues). The tract at residues Glu-851–Asn-873 is disordered. Positions 876, 878, 887, and 888 each coordinate Zn(2+).

This sequence belongs to the SecA family. As to quaternary structure, monomer and homodimer. Part of the essential Sec protein translocation apparatus which comprises SecA, SecYEG and auxiliary proteins SecDF. Other proteins may also be involved. It depends on Zn(2+) as a cofactor.

It is found in the cell membrane. Its subcellular location is the cytoplasm. It carries out the reaction ATP + H2O + cellular proteinSide 1 = ADP + phosphate + cellular proteinSide 2.. Functionally, part of the Sec protein translocase complex. Interacts with the SecYEG preprotein conducting channel. Has a central role in coupling the hydrolysis of ATP to the transfer of proteins into and across the cell membrane, serving as an ATP-driven molecular motor driving the stepwise translocation of polypeptide chains across the membrane. The sequence is that of Protein translocase subunit SecA from Alkaliphilus oremlandii (strain OhILAs) (Clostridium oremlandii (strain OhILAs)).